The chain runs to 248 residues: ATP synthase subunit a (248 aa).

7 helical membrane passes run 29–49 (AMLT…CLFS), 85–105 (VFPF…QGLV), 115–135 (LIQT…IVLA), 143–163 (LFLP…IEIV), 176–196 (LFAN…VAWA), 201–221 (GGLL…LFGL), and 227–247 (LIQA…AIVL).

Belongs to the ATPase A chain family. F-type ATPases have 2 components, CF(1) - the catalytic core - and CF(0) - the membrane proton channel. CF(1) has five subunits: alpha(3), beta(3), gamma(1), delta(1), epsilon(1). CF(0) has three main subunits: a, b and c.

The protein localises to the mitochondrion inner membrane. Its function is as follows. Mitochondrial membrane ATP synthase (F(1)F(0) ATP synthase or Complex V) produces ATP from ADP in the presence of a proton gradient across the membrane which is generated by electron transport complexes of the respiratory chain. F-type ATPases consist of two structural domains, F(1) - containing the extramembraneous catalytic core and F(0) - containing the membrane proton channel, linked together by a central stalk and a peripheral stalk. During catalysis, ATP synthesis in the catalytic domain of F(1) is coupled via a rotary mechanism of the central stalk subunits to proton translocation. Key component of the proton channel; it may play a direct role in the translocation of protons across the membrane. In Pylaiella littoralis (Seaweed), this protein is ATP synthase subunit a (ATP6).